The primary structure comprises 896 residues: Protein translocase subunit SecA (896 aa).

Residues Q87, 105–109, and D507 each bind ATP; that span reads GEGKT. The tract at residues 855 to 879 is disordered; the sequence is LSENDEASETQTFRRQEKKIGRNDP. Over residues 866 to 876 the composition is skewed to basic and acidic residues; sequence TFRRQEKKIGR. 4 residues coordinate Zn(2+): C880, C882, C891, and H892.

The protein belongs to the SecA family. As to quaternary structure, monomer and homodimer. Part of the essential Sec protein translocation apparatus which comprises SecA, SecYEG and auxiliary proteins SecDF-YajC and YidC. Requires Zn(2+) as cofactor.

The protein localises to the cell inner membrane. Its subcellular location is the cytoplasm. The catalysed reaction is ATP + H2O + cellular proteinSide 1 = ADP + phosphate + cellular proteinSide 2.. Functionally, part of the Sec protein translocase complex. Interacts with the SecYEG preprotein conducting channel. Has a central role in coupling the hydrolysis of ATP to the transfer of proteins into and across the cell membrane, serving both as a receptor for the preprotein-SecB complex and as an ATP-driven molecular motor driving the stepwise translocation of polypeptide chains across the membrane. This chain is Protein translocase subunit SecA, found in Legionella pneumophila (strain Lens).